A 133-amino-acid chain; its full sequence is Profilin (133 aa).

Belongs to the profilin family.

Its function is as follows. More likely to influence phosphoinositide metabolism than actin assembly. This Vaccinia virus (strain Tian Tan) (VACV) protein is Profilin.